A 630-amino-acid polypeptide reads, in one-letter code: Sodium-dependent serotonin transporter (630 aa).

Topologically, residues 1–87 (METTPLNSQK…ERETWGKKVD (87 aa)) are cytoplasmic. The segment at 31–59 (VPTPGDKVESGQISNGYSAVPSPGAGDDT) is disordered. Position 47 is a phosphotyrosine (tyrosine 47). Residues 88 to 112 (FLLSVIGYAVDLGNVWRFPYICYQN) form a helical membrane-spanning segment. Residues glycine 94, alanine 96, valine 97, aspartate 98, and asparagine 101 each coordinate Na(+). A serotonin-binding site is contributed by aspartate 98. Residues 113–115 (GGG) lie on the Extracellular side of the membrane. Residues 116–135 (AFLIPYTIMAIFGGIPLFYM) form a helical membrane-spanning segment. The Cytoplasmic segment spans residues 136 to 160 (ELALGQYHRNGCISIWRKICPIFKG). A Phosphotyrosine modification is found at tyrosine 142. A helical membrane pass occupies residues 161–186 (IGYAICIIAFYIASYYNTIMAWALYY). At 187–252 (LISSFTDQLP…KGLQDLGGIS (66 aa)) the chain is on the extracellular side. Cysteine 200 and cysteine 209 are joined by a disulfide. N-linked (GlcNAc...) asparagine glycosylation is found at asparagine 208 and asparagine 217. The helical transmembrane segment at 253–271 (WQLALCIMLIFTVIYFSIW) threads the bilayer. Residues 272–277 (KGVKTS) lie on the Cytoplasmic side of the membrane. Phosphothreonine is present on threonine 276. The chain crosses the membrane as a helical span at residues 278–297 (GKVVWVTATFPYIILSVLLV). At 298–324 (RGATLPGAWRGVLFYLKPNWQKLLETG) the chain is on the extracellular side. A helical transmembrane segment spans residues 325-347 (VWIDAAAQIFFSLGPGFGVLLAF). Serine 336 is a binding site for Na(+). Residues 348 to 360 (ASYNKFNNNCYQD) are Cytoplasmic-facing. The helical transmembrane segment at 361–380 (ALVTSVVNCMTSFVSGFVIF) threads the bilayer. Asparagine 368 is a binding site for Na(+). Over 381–421 (TVLGYMAEMRNEDVSEVAKDAGPSLLFITYAEAIANMPAST) the chain is Extracellular. The chain crosses the membrane as a helical span at residues 422–443 (FFAIIFFLMLITLGLDSTFAGL). Na(+) is bound by residues leucine 434, aspartate 437, and serine 438. Threonine 439 lines the serotonin pocket. Residues 444–463 (EGVITAVLDEFPHIWAKRRE) lie on the Cytoplasmic side of the membrane. A helical transmembrane segment spans residues 464–483 (WFVLAVVITCFFGSLVTLTF). The Extracellular portion of the chain corresponds to 484-494 (GGAYVVKLLEE). Serotonin contacts are provided by glutamate 494 and tyrosine 495. The chain crosses the membrane as a helical span at residues 495-516 (YATGPAVLTVALIEAVAVSWFY). Topologically, residues 517–538 (GITQFCRDVKEMLGFSPGWFWR) are cytoplasmic. A helical membrane pass occupies residues 539–558 (ICWVAISPLFLLFIICSFLM). Serotonin contacts are provided by phenylalanine 556 and serine 559. Over 559 to 574 (SPPQLRLFQYNYPHWS) the chain is Extracellular. Residues 575–595 (IILGYCIGTSSFVCIPTYIAY) form a helical membrane-spanning segment. Over 596 to 630 (RLISTPGTFKERIIKSITPETPTEIPCGDVRLNAV) the chain is Cytoplasmic. Residues 616–624 (TPTEIPCGD) are interaction with RAB4A.

The protein belongs to the sodium:neurotransmitter symporter (SNF) (TC 2.A.22) family. SLC6A4 subfamily. As to quaternary structure, monomer or homooligomer. Interacts (via C-terminus) with SCAMP2; the interaction is direct and retains transporter molecules intracellularly. Interacts with filamentous actin and STX1A. Interacts (via the N-terminus) with STX1A (via the H3 domain); this interaction regulates SLC4A6 channel conductance. Interacts with SEC23A, SEC24C and PATJ. Interacts with NOS1; the interaction may diminish the cell surface localization of SERT in the brain and, correspondingly, reduce serotonin reuptake. Interacts with TGFB1I1. Interacts with ITGAV:ITGB3. Interacts (via C-terminus) with ITGB3; this interaction regulates SLC6A4 trafficking. Post-translationally, phosphorylation at Thr-276 increases 5-HT uptake and is required for cGMP-mediated SERT regulation.

It localises to the cell membrane. Its subcellular location is the endomembrane system. It is found in the endosome membrane. The protein resides in the synapse. The protein localises to the cell junction. It localises to the focal adhesion. Its subcellular location is the cell projection. It is found in the neuron projection. The catalysed reaction is serotonin(out) + K(+)(in) + Na(+)(out) + H(+)(in) = serotonin(in) + K(+)(out) + Na(+)(in) + H(+)(out). Functionally, serotonin transporter that cotransports serotonin with one Na(+) ion in exchange for one K(+) ion and possibly one proton in an overall electroneutral transport cycle. Transports serotonin across the plasma membrane from the extracellular compartment to the cytosol thus limiting serotonin intercellular signaling. Essential for serotonin homeostasis in the central nervous system. In the developing somatosensory cortex, acts in glutamatergic neurons to control serotonin uptake and its trophic functions accounting for proper spatial organization of cortical neurons and elaboration of sensory circuits. In the mature cortex, acts primarily in brainstem raphe neurons to mediate serotonin uptake from the synaptic cleft back into the pre-synaptic terminal thus terminating serotonin signaling at the synapse. Modulates mucosal serotonin levels in the gastrointestinal tract through uptake and clearance of serotonin in enterocytes. Required for enteric neurogenesis and gastrointestinal reflexes. Regulates blood serotonin levels by ensuring rapid high affinity uptake of serotonin from plasma to platelets, where it is further stored in dense granules via vesicular monoamine transporters and then released upon stimulation. Mechanistically, the transport cycle starts with an outward-open conformation having Na1(+) and Cl(-) sites occupied. The binding of a second extracellular Na2(+) ion and serotonin substrate leads to structural changes to outward-occluded to inward-occluded to inward-open, where the Na2(+) ion and serotonin are released into the cytosol. Binding of intracellular K(+) ion induces conformational transitions to inward-occluded to outward-open and completes the cycle by releasing K(+) possibly together with a proton bound to Asp-98 into the extracellular compartment. Na1(+) and Cl(-) ions remain bound throughout the transport cycle. Additionally, displays serotonin-induced channel-like conductance for monovalent cations, mainly Na(+) ions. The channel activity is uncoupled from the transport cycle and may contribute to the membrane resting potential or excitability. The protein is Sodium-dependent serotonin transporter (SLC6A4) of Macaca mulatta (Rhesus macaque).